Reading from the N-terminus, the 378-residue chain is Probable pectin lyase A (378 aa).

A signal peptide spans 1 to 18; that stretch reads MKYASFLALVGFITSTSA. 2 disulfide bridges follow: Cys81/Cys100 and Cys90/Cys224. Residue Arg254 is part of the active site. Cys321 and Cys329 form a disulfide bridge.

Belongs to the polysaccharide lyase 1 family.

It localises to the secreted. It carries out the reaction Eliminative cleavage of (1-&gt;4)-alpha-D-galacturonan methyl ester to give oligosaccharides with 4-deoxy-6-O-methyl-alpha-D-galact-4-enuronosyl groups at their non-reducing ends.. Pectinolytic enzymes consist of four classes of enzymes: pectin lyase, polygalacturonase, pectin methylesterase and rhamnogalacturonase. Among pectinolytic enzymes, pectin lyase is the most important in depolymerization of pectin, since it cleaves internal glycosidic bonds of highly methylated pectins. The protein is Probable pectin lyase A (pelA) of Aspergillus clavatus (strain ATCC 1007 / CBS 513.65 / DSM 816 / NCTC 3887 / NRRL 1 / QM 1276 / 107).